Reading from the N-terminus, the 598-residue chain is Pescadillo homolog (598 aa).

The disordered stretch occupies residues 296–317; it reads QAMKADSKDKDDNSNDEAPENV. Positions 345-439 constitute a BRCT domain; the sequence is PTATLFEDFV…ELLSANLYLP (95 aa). Disordered regions lie at residues 452–501, 515–544, and 564–598; these read DALG…EDVE, GIAY…EDEE, and MKYS…VEKK. The segment covering 463–485 has biased composition (acidic residues); sequence ESEDESSDSSEESDSEIENEEED. Composition is skewed to basic and acidic residues over residues 520-532, 570-579, and 586-598; these read KAKD…DVAS, QKEDKIEELK, and AKKE…VEKK. Residues 557–598 are a coiled coil; that stretch reads QRKLYKKMKYSNQQKEDKIEELKKKKKQLAKKEKTLKKVEKK.

The protein belongs to the pescadillo family. As to quaternary structure, component of the NOP7 complex, composed of ERB1, NOP7 and YTM1. The complex is held together by ERB1, which interacts with NOP7 via its N-terminal domain and with YTM1 via a high-affinity interaction between the seven-bladed beta-propeller domains of the 2 proteins. The NOP7 complex associates with the 66S pre-ribosome.

The protein resides in the nucleus. The protein localises to the nucleolus. It localises to the nucleoplasm. Functionally, component of the NOP7 complex, which is required for maturation of the 25S and 5.8S ribosomal RNAs and formation of the 60S ribosome. The sequence is that of Pescadillo homolog from Candida glabrata (strain ATCC 2001 / BCRC 20586 / JCM 3761 / NBRC 0622 / NRRL Y-65 / CBS 138) (Yeast).